The sequence spans 256 residues: Thiazole synthase (256 aa).

Lys-96 serves as the catalytic Schiff-base intermediate with DXP. 1-deoxy-D-xylulose 5-phosphate-binding positions include Gly-157, Ala-183–Gly-184, and Asn-205–Thr-206.

The protein belongs to the ThiG family. In terms of assembly, homotetramer. Forms heterodimers with either ThiH or ThiS.

The protein resides in the cytoplasm. It catalyses the reaction [ThiS sulfur-carrier protein]-C-terminal-Gly-aminoethanethioate + 2-iminoacetate + 1-deoxy-D-xylulose 5-phosphate = [ThiS sulfur-carrier protein]-C-terminal Gly-Gly + 2-[(2R,5Z)-2-carboxy-4-methylthiazol-5(2H)-ylidene]ethyl phosphate + 2 H2O + H(+). Its pathway is cofactor biosynthesis; thiamine diphosphate biosynthesis. Catalyzes the rearrangement of 1-deoxy-D-xylulose 5-phosphate (DXP) to produce the thiazole phosphate moiety of thiamine. Sulfur is provided by the thiocarboxylate moiety of the carrier protein ThiS. In vitro, sulfur can be provided by H(2)S. In Clostridioides difficile (strain 630) (Peptoclostridium difficile), this protein is Thiazole synthase.